The primary structure comprises 464 residues: ATP synthase subunit beta (464 aa).

ATP is bound at residue 148-155 (GGAGVGKT).

Belongs to the ATPase alpha/beta chains family. In terms of assembly, F-type ATPases have 2 components, CF(1) - the catalytic core - and CF(0) - the membrane proton channel. CF(1) has five subunits: alpha(3), beta(3), gamma(1), delta(1), epsilon(1). CF(0) has three main subunits: a(1), b(2) and c(9-12). The alpha and beta chains form an alternating ring which encloses part of the gamma chain. CF(1) is attached to CF(0) by a central stalk formed by the gamma and epsilon chains, while a peripheral stalk is formed by the delta and b chains.

Its subcellular location is the cell inner membrane. The enzyme catalyses ATP + H2O + 4 H(+)(in) = ADP + phosphate + 5 H(+)(out). Produces ATP from ADP in the presence of a proton gradient across the membrane. The catalytic sites are hosted primarily by the beta subunits. The polypeptide is ATP synthase subunit beta (Marinobacter nauticus (strain ATCC 700491 / DSM 11845 / VT8) (Marinobacter aquaeolei)).